The sequence spans 61 residues: uncharacterized protein (61 aa).

This is an uncharacterized protein from Archaeoglobus fulgidus (strain ATCC 49558 / DSM 4304 / JCM 9628 / NBRC 100126 / VC-16).